A 243-amino-acid chain; its full sequence is 1-(5-phosphoribosyl)-5-[(5-phosphoribosylamino)methylideneamino] imidazole-4-carboxamide isomerase (243 aa).

D8 functions as the Proton acceptor in the catalytic mechanism. Residue D129 is the Proton donor of the active site.

It belongs to the HisA/HisF family.

It localises to the cytoplasm. The enzyme catalyses 1-(5-phospho-beta-D-ribosyl)-5-[(5-phospho-beta-D-ribosylamino)methylideneamino]imidazole-4-carboxamide = 5-[(5-phospho-1-deoxy-D-ribulos-1-ylimino)methylamino]-1-(5-phospho-beta-D-ribosyl)imidazole-4-carboxamide. The protein operates within amino-acid biosynthesis; L-histidine biosynthesis; L-histidine from 5-phospho-alpha-D-ribose 1-diphosphate: step 4/9. This is 1-(5-phosphoribosyl)-5-[(5-phosphoribosylamino)methylideneamino] imidazole-4-carboxamide isomerase from Brucella anthropi (strain ATCC 49188 / DSM 6882 / CCUG 24695 / JCM 21032 / LMG 3331 / NBRC 15819 / NCTC 12168 / Alc 37) (Ochrobactrum anthropi).